We begin with the raw amino-acid sequence, 161 residues long: Allophycocyanin subunit alpha-B (161 aa).

N71 is subject to N4-methylasparagine. Residue C81 coordinates (2R,3E)-phycocyanobilin.

This sequence belongs to the phycobiliprotein family. In terms of assembly, heterodimer of an alpha-B and a beta chain forming AP-B. In terms of processing, contains one covalently linked bilin chromophore. The chromophore is added by phycocyanobilin lyase CpcUS.

It localises to the cellular thylakoid membrane. A variant alpha-allophycocyanin (AP) which forms a complex with beta-AP with maximum absorption at approximately 670 nanometers. It is an important phycobilisome terminal emitter involved in energy transfer to photosystem I. The sequence is that of Allophycocyanin subunit alpha-B (apcD) from Picosynechococcus sp. (strain ATCC 27264 / PCC 7002 / PR-6) (Agmenellum quadruplicatum).